The following is a 160-amino-acid chain: Nucleotide-binding protein Noc_2254 (160 aa).

The protein belongs to the YajQ family.

Nucleotide-binding protein. This is Nucleotide-binding protein Noc_2254 from Nitrosococcus oceani (strain ATCC 19707 / BCRC 17464 / JCM 30415 / NCIMB 11848 / C-107).